Consider the following 157-residue polypeptide: Transcriptional repressor NrdR (157 aa).

A zinc finger spans residues 3–34; it reads CPHCHQNSSRVIDSRPTDEGRVIRRRRECENC. Residues 49 to 139 enclose the ATP-cone domain; sequence LLVIKKNGTR…VYRQFKDMNV (91 aa).

This sequence belongs to the NrdR family. It depends on Zn(2+) as a cofactor.

Negatively regulates transcription of bacterial ribonucleotide reductase nrd genes and operons by binding to NrdR-boxes. The polypeptide is Transcriptional repressor NrdR (Latilactobacillus sakei subsp. sakei (strain 23K) (Lactobacillus sakei subsp. sakei)).